Consider the following 39-residue polypeptide: ATYYGNGLYCNKQKHYTWVDWNKASREIGKITVNGWVQH.

This sequence belongs to the bacteriocin class IIA/YGNGV family.

The protein resides in the secreted. Bacteriocin with antibacterial activity against C.jejuni. The protein is Bacteriocin SRCAM 602 of Paenibacillus polymyxa (Bacillus polymyxa).